A 550-amino-acid chain; its full sequence is 2-succinyl-5-enolpyruvyl-6-hydroxy-3-cyclohexene-1-carboxylate synthase (550 aa).

This sequence belongs to the TPP enzyme family. MenD subfamily. As to quaternary structure, homodimer. Requires Mg(2+) as cofactor. Mn(2+) is required as a cofactor. The cofactor is thiamine diphosphate.

It carries out the reaction isochorismate + 2-oxoglutarate + H(+) = 5-enolpyruvoyl-6-hydroxy-2-succinyl-cyclohex-3-ene-1-carboxylate + CO2. The protein operates within quinol/quinone metabolism; 1,4-dihydroxy-2-naphthoate biosynthesis; 1,4-dihydroxy-2-naphthoate from chorismate: step 2/7. It participates in quinol/quinone metabolism; menaquinone biosynthesis. In terms of biological role, catalyzes the thiamine diphosphate-dependent decarboxylation of 2-oxoglutarate and the subsequent addition of the resulting succinic semialdehyde-thiamine pyrophosphate anion to isochorismate to yield 2-succinyl-5-enolpyruvyl-6-hydroxy-3-cyclohexene-1-carboxylate (SEPHCHC). The chain is 2-succinyl-5-enolpyruvyl-6-hydroxy-3-cyclohexene-1-carboxylate synthase from Desulfitobacterium hafniense (strain DSM 10664 / DCB-2).